A 506-amino-acid chain; its full sequence is Vinckepain-1 (506 aa).

Topologically, residues 1–32 (MSDNIGQINFTIPGIQSLDENDTYLKINHKKT) are cytoplasmic. Positions 1–262 (MSDNIGQINF…LISVDNKSKD (262 aa)) are cleaved as a propeptide — activation peptide. Residues 33–53 (IKICAYAITAIALFFIGGVFF) traverse the membrane as a helical; Signal-anchor for type II membrane protein segment. The Lumenal segment spans residues 54-506 (KNQAKINALD…VGSDVFFPIY (453 aa)). N-linked (GlcNAc...) asparagine glycosylation is found at Asn-133 and Asn-258. 4 disulfide bridges follow: Cys-284–Cys-326, Cys-319–Cys-359, Cys-344–Cys-364, and Cys-413–Cys-495. The active site involves Cys-287. N-linked (GlcNAc...) asparagine glycosylation occurs at Asn-418. Active-site residues include His-419 and Asn-470.

The protein belongs to the peptidase C1 family.

It is found in the membrane. Its function is as follows. Cysteine protease. This is Vinckepain-1 from Plasmodium vinckei.